The chain runs to 151 residues: Ribosome maturation factor RimP (151 aa).

Belongs to the RimP family.

Its subcellular location is the cytoplasm. Its function is as follows. Required for maturation of 30S ribosomal subunits. The protein is Ribosome maturation factor RimP of Halorhodospira halophila (strain DSM 244 / SL1) (Ectothiorhodospira halophila (strain DSM 244 / SL1)).